The following is a 202-amino-acid chain: Regulator of G-protein signaling 16 (202 aa).

2 S-palmitoyl cysteine lipidation sites follow: C2 and C12. One can recognise an RGS domain in the interval 65 to 181; the sequence is SFDLLLSSKN…LKSPAYRDLA (117 aa). At Y168 the chain carries Phosphotyrosine; by EGFR. Y177 is subject to Phosphotyrosine. The disordered stretch occupies residues 183-202; the sequence is QATAASASPSSSSPAEPLHT.

Interacts with GNAI1 and GNAQ. Interacts with GNAI3, GNAI3 and GNAO1. Palmitoylated on Cys-2 and/or Cys-12. In terms of processing, phosphorylated. Phosphorylation at Tyr-168 by EGFR enhances GTPase accelerating (GAP) activity toward GNAI1.

It is found in the membrane. In terms of biological role, regulates G protein-coupled receptor signaling cascades. Inhibits signal transduction by increasing the GTPase activity of G protein alpha subunits, thereby driving them into their inactive GDP-bound form. Plays an important role in the phototransduction cascade by regulating the lifetime and effective concentration of activated transducin alpha. May regulate extra and intracellular mitogenic signals. The chain is Regulator of G-protein signaling 16 (RGS16) from Bos taurus (Bovine).